Consider the following 89-residue polypeptide: Small ribosomal subunit protein uS15 (89 aa).

Belongs to the universal ribosomal protein uS15 family. In terms of assembly, part of the 30S ribosomal subunit. Forms a bridge to the 50S subunit in the 70S ribosome, contacting the 23S rRNA.

Functionally, one of the primary rRNA binding proteins, it binds directly to 16S rRNA where it helps nucleate assembly of the platform of the 30S subunit by binding and bridging several RNA helices of the 16S rRNA. In terms of biological role, forms an intersubunit bridge (bridge B4) with the 23S rRNA of the 50S subunit in the ribosome. The sequence is that of Small ribosomal subunit protein uS15 from Beijerinckia indica subsp. indica (strain ATCC 9039 / DSM 1715 / NCIMB 8712).